The following is a 255-amino-acid chain: Proteasome subunit alpha (255 aa).

The interval 224 to 255 is disordered; that stretch reads RLEELLGERGPAQHAPEEPADPEPEPPIAPPG.

It belongs to the peptidase T1A family. As to quaternary structure, the 20S proteasome core is composed of 14 alpha and 14 beta subunits that assemble into four stacked heptameric rings, resulting in a barrel-shaped structure. The two inner rings, each composed of seven catalytic beta subunits, are sandwiched by two outer rings, each composed of seven alpha subunits. The catalytic chamber with the active sites is on the inside of the barrel. Has a gated structure, the ends of the cylinder being occluded by the N-termini of the alpha-subunits. Is capped by the proteasome-associated ATPase, ARC.

The protein resides in the cytoplasm. It functions in the pathway protein degradation; proteasomal Pup-dependent pathway. The formation of the proteasomal ATPase ARC-20S proteasome complex, likely via the docking of the C-termini of ARC into the intersubunit pockets in the alpha-rings, may trigger opening of the gate for substrate entry. Interconversion between the open-gate and close-gate conformations leads to a dynamic regulation of the 20S proteasome proteolysis activity. Its function is as follows. Component of the proteasome core, a large protease complex with broad specificity involved in protein degradation. The polypeptide is Proteasome subunit alpha (Nocardioides sp. (strain ATCC BAA-499 / JS614)).